We begin with the raw amino-acid sequence, 347 residues long: 4-hydroxy-2-oxovalerate aldolase (347 aa).

A Pyruvate carboxyltransferase domain is found at 11–262; sequence PVVVDTTLRD…NPGLDVFKLL (252 aa). A substrate-binding site is contributed by 19–20; that stretch reads RD. Asp-20 lines the Mn(2+) pocket. The active-site Proton acceptor is the His-23. Positions 173 and 201 each coordinate substrate. Mn(2+) contacts are provided by His-201 and His-203. Position 292 (Tyr-292) interacts with substrate.

This sequence belongs to the 4-hydroxy-2-oxovalerate aldolase family. As to quaternary structure, homodimer. Can also form a heterotetramer composed of two aldolase (TTHB246) and two dehydrogenase (TTHB247) subunits. Upon complex formation, the aldolase shows a 5-fold increase in substrate affinity, while the dehydrogenase shows a 3-fold decrease; the kcat values of each enzyme are reduced by 2-fold when they are in a complex. Co(2+) is required as a cofactor. Ni(2+) serves as cofactor. Requires Mn(2+) as cofactor.

It catalyses the reaction (S)-4-hydroxy-2-oxopentanoate = acetaldehyde + pyruvate. The enzyme catalyses (S)-4-hydroxy-2-oxohexanoate = propanal + pyruvate. Appears to be allosterically activated by NADH. Its function is as follows. Catalyzes the retro-aldol cleavage of both 4-hydroxy-2-oxopentanoate (HOPA) and 4-hydroxy-2-oxohexanoate (HOHA) to pyruvate and acetaldehyde or propanaldehyde, respectively. The aldehydes produced by this reaction are directly channeled to the dehydrogenase TTHB247, ensuring that these toxic aldehydes are sequestered from cellular components. Is involved in the meta-cleavage pathway for the degradation of aromatic compounds. Appears to be stereospecific since it can cleave (4S)-4-hydroxy-2-oxopentanoate but not the (4R) isomer. Is not able to catalyze the aldol addition of 2-oxobutyrate with acetaldehyde; this indicates that the enzyme is specific for pyruvate as the carbonyl donor. This is 4-hydroxy-2-oxovalerate aldolase from Thermus thermophilus (strain ATCC 27634 / DSM 579 / HB8).